We begin with the raw amino-acid sequence, 587 residues long: Aspartate--tRNA ligase (587 aa).

Glu175 lines the L-aspartate pocket. Positions 199-202 (QQFK) are aspartate. L-aspartate-binding residues include Arg221 and His446. 221-223 (RDE) provides a ligand contact to ATP. Glu480 serves as a coordination point for ATP. Arg487 provides a ligand contact to L-aspartate. Position 532 to 535 (532 to 535 (GVDR)) interacts with ATP.

The protein belongs to the class-II aminoacyl-tRNA synthetase family. Type 1 subfamily. In terms of assembly, homodimer.

The protein localises to the cytoplasm. It carries out the reaction tRNA(Asp) + L-aspartate + ATP = L-aspartyl-tRNA(Asp) + AMP + diphosphate. Functionally, catalyzes the attachment of L-aspartate to tRNA(Asp) in a two-step reaction: L-aspartate is first activated by ATP to form Asp-AMP and then transferred to the acceptor end of tRNA(Asp). The protein is Aspartate--tRNA ligase of Streptomyces avermitilis (strain ATCC 31267 / DSM 46492 / JCM 5070 / NBRC 14893 / NCIMB 12804 / NRRL 8165 / MA-4680).